Consider the following 131-residue polypeptide: MSGVYLTVPQAPELINERIPSFTASCSEVAPEHSEMPLTVIYIVLPVVMESQLESTLDILWIPESYSTLMQENMGFPYHGRLQILAGARDSLYLGRDAVVLLCPSLPFPTFTKWLIQVILLLSYWGSGGFG.

Its subcellular location is the mitochondrion. This is an uncharacterized protein from Arabidopsis thaliana (Mouse-ear cress).